The chain runs to 807 residues: Glycerol-3-phosphate acyltransferase (807 aa).

An HXXXXD motif motif is present at residues 305 to 310; that stretch reads CHRSHM.

It belongs to the GPAT/DAPAT family.

It localises to the cell inner membrane. It carries out the reaction sn-glycerol 3-phosphate + an acyl-CoA = a 1-acyl-sn-glycero-3-phosphate + CoA. The protein operates within phospholipid metabolism; CDP-diacylglycerol biosynthesis; CDP-diacylglycerol from sn-glycerol 3-phosphate: step 1/3. This Escherichia coli O139:H28 (strain E24377A / ETEC) protein is Glycerol-3-phosphate acyltransferase.